Consider the following 64-residue polypeptide: Large ribosomal subunit protein bL35 (64 aa).

The disordered stretch occupies residues 1 to 56 (MPKMKSNKSVAARFKLTGSGQLKRTRPGKRHKLSKKSSQEKRNLSKQPLVDKGQVG). The segment covering 23–35 (KRTRPGKRHKLSK) has biased composition (basic residues).

The protein belongs to the bacterial ribosomal protein bL35 family.

The protein is Large ribosomal subunit protein bL35 of Chlamydia abortus (strain DSM 27085 / S26/3) (Chlamydophila abortus).